A 224-amino-acid chain; its full sequence is MMIAGIDEAGKGPVIGPMCIGGVKIEESRAHILKVLGVADSKKLTPKKREQLAAQIKKHADGFFVLEVSPSQIDELRKIMTMNEIMVVCFSKVLEQLKPDLLYADAADVNAERFATNIRKQYSKTNPDHAKEIEIISMHQADATYPVVSAASIIAKVRRDELIEELKKEWGLDFGSGYPSDPKTKEFLLNWGKEHSGEFPEIVRQSWQTVENIREELKKTGNKN.

The RNase H type-2 domain maps to 1–219; it reads MMIAGIDEAG…VENIREELKK (219 aa). A divalent metal cation contacts are provided by Asp7, Glu8, and Asp105.

Belongs to the RNase HII family. The cofactor is Mn(2+). Mg(2+) serves as cofactor.

The protein resides in the cytoplasm. It catalyses the reaction Endonucleolytic cleavage to 5'-phosphomonoester.. Endonuclease that specifically degrades the RNA of RNA-DNA hybrids. In Methanosarcina barkeri (strain Fusaro / DSM 804), this protein is Ribonuclease HII.